A 116-amino-acid polypeptide reads, in one-letter code: Phosphoribosyl-AMP cyclohydrolase (116 aa).

Asp81 is a Mg(2+) binding site. A Zn(2+)-binding site is contributed by Cys82. Residues Asp83 and Asp85 each coordinate Mg(2+). Cys98 and Cys105 together coordinate Zn(2+).

The protein belongs to the PRA-CH family. As to quaternary structure, homodimer. It depends on Mg(2+) as a cofactor. The cofactor is Zn(2+).

It is found in the cytoplasm. The catalysed reaction is 1-(5-phospho-beta-D-ribosyl)-5'-AMP + H2O = 1-(5-phospho-beta-D-ribosyl)-5-[(5-phospho-beta-D-ribosylamino)methylideneamino]imidazole-4-carboxamide. Its pathway is amino-acid biosynthesis; L-histidine biosynthesis; L-histidine from 5-phospho-alpha-D-ribose 1-diphosphate: step 3/9. Functionally, catalyzes the hydrolysis of the adenine ring of phosphoribosyl-AMP. The polypeptide is Phosphoribosyl-AMP cyclohydrolase (Mycolicibacterium vanbaalenii (strain DSM 7251 / JCM 13017 / BCRC 16820 / KCTC 9966 / NRRL B-24157 / PYR-1) (Mycobacterium vanbaalenii)).